We begin with the raw amino-acid sequence, 398 residues long: Phosphoglycerate kinase (398 aa).

Substrate-binding positions include 21–23, arginine 37, 60–63, arginine 117, and arginine 157; these read DIN and HQGR. ATP-binding positions include glutamate 332 and 357 to 360; that span reads GGDT.

This sequence belongs to the phosphoglycerate kinase family. Monomer.

The protein localises to the cytoplasm. The catalysed reaction is (2R)-3-phosphoglycerate + ATP = (2R)-3-phospho-glyceroyl phosphate + ADP. Its pathway is carbohydrate degradation; glycolysis; pyruvate from D-glyceraldehyde 3-phosphate: step 2/5. The polypeptide is Phosphoglycerate kinase (Halobacterium salinarum (strain ATCC 29341 / DSM 671 / R1)).